The sequence spans 659 residues: Nicastrin (659 aa).

The signal sequence occupies residues 1–22 (MKIKNYFIIVFIIIVLSTDVIS). The Extracellular segment spans residues 23–627 (SQSSIEDKMY…LFQVGSYANE (605 aa)). Asparagine 94, asparagine 172, asparagine 305, asparagine 389, asparagine 451, asparagine 475, asparagine 550, asparagine 553, and asparagine 600 each carry an N-linked (GlcNAc...) asparagine glycan. A helical transmembrane segment spans residues 628 to 648 (IWFLVSGLIELLLSVGIIFYI). The Cytoplasmic segment spans residues 649 to 659 (KKYLSKRYKLL).

The protein belongs to the nicastrin family. Homodimer. Component of the gamma-secretase complex, a complex composed of a presenilin homodimer, nicastrin, aph1 and pen2.

The protein resides in the membrane. Essential subunit of the gamma-secretase complex, an endoprotease complex that catalyzes the intramembrane cleavage of integral membrane proteins such as Notch receptors and APP (amyloid-beta precursor protein). It probably represents a stabilizing cofactor required for the assembly of the gamma-secretase complex. This is Nicastrin (ncstn) from Dictyostelium discoideum (Social amoeba).